We begin with the raw amino-acid sequence, 483 residues long: MLTLDTLNVMLAVSEEGLIEEMIIALLASPQLAVFFEKFPRLKAAITDDVPRWREALRSRLKDARVPPELTEEVMCYQQSQLLSTPQFIVQLPQILDLLHRLNSPWAEQARQLVDANSTITSALHTLFLQRWRLSLIVQATTLNQQLLEEEREQLLSEVQERMTLSGQLEPILADNNTAAGRLWDMSAGQLKRGDYQLIVKYGEFLNEQPELKRLAEQLGRSREAKSIPRNDAQMETFRTLVREPATVPEQVDGLQQSDDILRLLPPELATLGITELEYEFYRRLVEKQLLTYRLHGESWREKVIERPVVHKDYDEQPRGPFIVCVDTSGSMGGFNEQCAKAFCLALMRIALAENRRCYIMLFSTEIVRYELSGPQGIEQAIRFLSQQFRGGTDLASCFRAIMERLQSREWFDADAVVISDFIAQRLPDDVTSKVKELQRVHQHRFHAVAMSAHGKPGIMRIFDHIWRFDTGMRSRLLRRWRR.

This sequence belongs to the ViaA family. Homodimer. Interacts with RavA.

The protein resides in the cytoplasm. Functionally, component of the RavA-ViaA chaperone complex, which may act on the membrane to optimize the function of some of the respiratory chains. ViaA stimulates the ATPase activity of RavA. This chain is Regulatory protein ViaA, found in Escherichia coli O17:K52:H18 (strain UMN026 / ExPEC).